Reading from the N-terminus, the 333-residue chain is Ribosomal protein L11 methyltransferase (333 aa).

S-adenosyl-L-methionine contacts are provided by Thr160, Gly181, Asp203, and Asn267.

This sequence belongs to the methyltransferase superfamily. PrmA family.

The protein localises to the cytoplasm. The catalysed reaction is L-lysyl-[protein] + 3 S-adenosyl-L-methionine = N(6),N(6),N(6)-trimethyl-L-lysyl-[protein] + 3 S-adenosyl-L-homocysteine + 3 H(+). Methylates ribosomal protein L11. The protein is Ribosomal protein L11 methyltransferase of Lachnoclostridium phytofermentans (strain ATCC 700394 / DSM 18823 / ISDg) (Clostridium phytofermentans).